Here is a 375-residue protein sequence, read N- to C-terminus: Growth/differentiation factor 8 (375 aa).

Positions 1-18 are cleaved as a signal peptide; sequence MQKLQISVYIYLFMLIVA. A propeptide spanning residues 19–266 is cleaved from the precursor; sequence GPVDLNENSE…VTDTPKRSRR (248 aa). N-linked (GlcNAc...) asparagine glycosylation is found at N47 and N71. Intrachain disulfides connect C272/C282, C281/C340, C309/C372, and C313/C374.

This sequence belongs to the TGF-beta family. As to quaternary structure, homodimer; disulfide-linked. Interacts with WFIKKN2, leading to inhibit its activity. Interacts with FSTL3. Post-translationally, synthesized as large precursor molecule that undergoes proteolytic cleavage to generate an N-terminal propeptide and a disulfide linked C-terminal dimer, which is the biologically active molecule. The circulating form consists of a latent complex of the C-terminal dimer and other proteins, including its propeptide, which maintain the C-terminal dimer in a latent, inactive state. Ligand activation requires additional cleavage of the prodomain by a tolloid-like metalloproteinase.

The protein resides in the secreted. Its function is as follows. Acts specifically as a negative regulator of skeletal muscle growth. This is Growth/differentiation factor 8 (MSTN) from Bubalus bubalis (Domestic water buffalo).